Reading from the N-terminus, the 549-residue chain is Oxygen-dependent choline dehydrogenase (549 aa).

Position 4-33 (4-33 (DFVIIGSGSAGSALAYRLSEDGRNSVIVLE)) interacts with FAD. His465 serves as the catalytic Proton acceptor.

It belongs to the GMC oxidoreductase family. The cofactor is FAD.

The protein localises to the cell membrane. The catalysed reaction is choline + A = betaine aldehyde + AH2. The enzyme catalyses betaine aldehyde + NAD(+) + H2O = glycine betaine + NADH + 2 H(+). Its pathway is amine and polyamine biosynthesis; betaine biosynthesis via choline pathway; betaine aldehyde from choline (cytochrome c reductase route): step 1/1. In terms of biological role, involved in the biosynthesis of the osmoprotectant glycine betaine. Catalyzes the oxidation of choline to betaine aldehyde and betaine aldehyde to glycine betaine at the same rate. In Rhizobium meliloti (strain 1021) (Ensifer meliloti), this protein is Oxygen-dependent choline dehydrogenase.